The sequence spans 294 residues: Transcription factor nsy-7 (294 aa).

2 disordered regions span residues 43–119 (CNLR…TPDL) and 167–191 (LRLP…DSPL). Composition is skewed to polar residues over residues 52–63 (DQPTTSSNSVKE) and 81–115 (RRQS…SNDP). Positions 192–232 (QTRMKGWQREYIKEVIKDSHYPTEEELRDIEQKCDLSRKQI) form a DNA-binding region, homeobox; atypical. Positions 238–274 (KRLTNPNRKPRVNHHDEKRKEQEERDSLADPDDDMIN) are disordered. The segment covering 250–265 (NHHDEKRKEQEERDSL) has biased composition (basic and acidic residues).

Expressed widely, including gut, the amphid sheath glial cells, and head and tail neurons including AWC, ASE, and ASH. Expressed in AWC (ON) olfactory neuron but not AWC (OFF).

It localises to the nucleus. Its function is as follows. Transcriptional regulator which binds DNA consensus sequence 5'-CCTTAAC-3'. Plays a role in establishing and maintaining asymmetric cell fates in chemosensory AWC neurons during larval neuronal development. This is achieved by repressing the expression of multiple AWC (OFF) genes, including srsx-3 and hlh-11 in the AWC (ON) neuron. Activates expression of sox-2 in the AWC (ON) neuron. The protein is Transcription factor nsy-7 of Caenorhabditis elegans.